The sequence spans 408 residues: MDKLLERFLNYVSLDTQSKAGVRQVPSTEGQWKLLHLLKEQLEEMGLINVTLSEKGTLMATLPANVPGDIPAIGFISHVDTSPDCSGKNVNPQIVENYRGGDIALGIGDEVLSPVMFPVLHQLLGQTLITTDGKTLLGADDQAGIAEIMTALAVLQQKNIPHGDIRVAFTPDEEVGKGAKHFDVDAFDARWAYTVDGGGVGELEFENFNAASVNIKIVGNNVHPGTAKGVMVNALSLAARIHAEVPADESPEMTEGYEGFYHLASMKGTVERADMHYIIRDFDRKQFEARKRKMMEIAKKVGKGLHPDCYIELVIEDSYYNMREKVVEHPHILDIAQQAMRDCDIEPELKPIRGGTDGAQLSFMGLPCPNLFTGGYNYHGKHEFVTLEGMEKAVQVIVRIAELTAQRK.

His78 contributes to the Zn(2+) binding site. The active site involves Asp80. Position 140 (Asp140) interacts with Zn(2+). Catalysis depends on Glu173, which acts as the Proton acceptor. Zn(2+)-binding residues include Glu174, Asp196, and His379.

It belongs to the peptidase M20B family. Requires Zn(2+) as cofactor.

It localises to the cytoplasm. It catalyses the reaction Release of the N-terminal residue from a tripeptide.. Its function is as follows. Cleaves the N-terminal amino acid of tripeptides. This chain is Peptidase T, found in Escherichia coli O6:K15:H31 (strain 536 / UPEC).